A 209-amino-acid polypeptide reads, in one-letter code: Bcl-2 homologous antagonist/killer (209 aa).

The interval 1 to 28 is disordered; it reads MASGQGPGPPKVGCDESPSPSEQQVAQD. Position 2 is an N-acetylalanine (Ala-2). Polar residues predominate over residues 18-27; the sequence is PSPSEQQVAQ. Positions 72-86 match the BH3 motif; that stretch reads VGRQLALIGDDINRR. A BH1 motif is present at residues 115–134; the sequence is SLFKSGISWGRVVALLGFGY. Positions 158 and 162 each coordinate Zn(2+). The BH2 signature appears at 167 to 182; sequence RWIAQRGGWVAALNFR. The helical transmembrane segment at 186–203 threads the bilayer; that stretch reads ILTVMVIFGVVLLGQFVV.

Belongs to the Bcl-2 family. In terms of assembly, homodimer. Formation of the homodimer is zinc-dependent. Forms heterodimers with BCL2 and BCL2L1 isoform Bcl-X(L). Forms heterooligomers with BAX. Interacts with BCL2A1. Interacts withRTL10/BOP. Interacts with VDAC1. Interacts with GIMAP3/IAN4 and GIMAP5/IAN5. (Microbial infection) Interacts with gamma-herpesvirus 68 protein vBCL2. As to expression, widely expressed.

The protein localises to the mitochondrion outer membrane. Its function is as follows. In the presence of an appropriate stimulus, accelerates programmed cell death by binding to, and antagonizing the anti-apoptotic action of BCL2. This chain is Bcl-2 homologous antagonist/killer (Bak1), found in Mus musculus (Mouse).